We begin with the raw amino-acid sequence, 329 residues long: Deoxynucleotidyltransferase terminal-interacting protein 1 (329 aa).

Positions 1–27 are disordered; the sequence is MGATGDVEQPRGPGGAERGGPELGDAG. Residues 12–22 show a composition bias toward gly residues; the sequence is GPGGAERGGPE. Residues 56–147 form an important for dimerization region; it reads MTTSFTDPAI…RLTHELPGIK (92 aa). Positions 159-173 form a DNA-binding region, a.T hook; that stretch reads RGSPIPKKRKGRPPG. Phosphoserine is present on S161. Residues 164–170 carry the Nuclear localization signal motif; sequence PKKRKGR. The tract at residues 197–316 is important for DNA and nucleosome binding; the sequence is REGPKWDPAR…MRKYMETLRT (120 aa). Residues 216–237 constitute a DNA-binding region (H-T-H motif); it reads GSRANKALGMGGTRGRIYIKHP.

As to quaternary structure, monomer and homodimer. A minor proportion may form homotrimers. Interacts with ZNF541. Interacts with the terminal deoxynucleotidyltransferase DNTT. Interacts with TRERF1. Identified in a histone deacetylase complex that contains DNTTIP1, HDAC1 and MIDEAS; this complex assembles into a tetramer that contains four copies of each protein chain. Component of a histone deacetylase complex containing DNTTIP1, ZNF541, HDAC1 and HDAC2. Identified in a complex with KCTD19, HDAC1, HDAC2 and ZNF541.

It localises to the nucleus. Increases DNTT terminal deoxynucleotidyltransferase activity (in vitro). Also acts as a transcriptional regulator, binding to the consensus sequence 5'-GNTGCATG-3' following an AT-tract. Associates with RAB20 promoter and positively regulates its transcription. Binds DNA and nucleosomes; may recruit HDAC1 complexes to nucleosomes or naked DNA. This chain is Deoxynucleotidyltransferase terminal-interacting protein 1 (DNTTIP1), found in Bos taurus (Bovine).